Here is a 750-residue protein sequence, read N- to C-terminus: Methylmalonyl-CoA mutase, mitochondrial (750 aa).

The transit peptide at 1–32 (MLRAKNQLFLLSPHYLRQVKESSGSRLIQQRL) directs the protein to the mitochondrion. Residue glutamine 50 participates in malonyl-CoA binding. Lysine 89 is modified (N6-acetyllysine). Malonyl-CoA contacts are provided by residues 96–99 (YPTM) and 106–110 (TIRQY). Residue lysine 212 is modified to N6-acetyllysine. Malonyl-CoA-binding positions include 216–218 (TIQ), arginine 228, lysine 255, histidine 265, and 304–306 (RLS). Lysine 335 bears the N6-acetyllysine mark. Lysine 343 is subject to N6-succinyllysine. A Phosphoserine modification is found at serine 481. An N6-succinyllysine modification is found at lysine 595. Position 602 is an N6-acetyllysine (lysine 602). The B12-binding domain occupies 614 to 746 (RPRLLVAKMG…DDIEKCLEKK (133 aa)). Histidine 627 serves as a coordination point for adenosylcob(III)alamin.

Belongs to the methylmalonyl-CoA mutase family. In terms of assembly, homodimer. Interacts (the apoenzyme form) with MMAA; the interaction is GTP dependent. The cofactor is adenosylcob(III)alamin.

It is found in the mitochondrion matrix. The protein localises to the mitochondrion. Its subcellular location is the cytoplasm. It catalyses the reaction (R)-methylmalonyl-CoA = succinyl-CoA. During catalysis, accumulation of oxidized inactive cofactor hydroxocobalamin (OH2Cbl) leads to loss of MMUT activity. Interaction with MMAA decreases the rate of OH2Cbl formation and promotes the replacement of OH2Cbl by the active cofactor adenosylcobalamin (AdoCbl), thereby restoring MMUT activity. Inhibited by itaconyl-CoA, a metabolite that inactivates the coenzyme B12 cofactor. Inhibited at high concentration of substrate. Its function is as follows. Catalyzes the reversible isomerization of methylmalonyl-CoA (MMCoA) (generated from branched-chain amino acid metabolism and degradation of dietary odd chain fatty acids and cholesterol) to succinyl-CoA (3-carboxypropionyl-CoA), a key intermediate of the tricarboxylic acid cycle. This Homo sapiens (Human) protein is Methylmalonyl-CoA mutase, mitochondrial.